We begin with the raw amino-acid sequence, 961 residues long: Aconitate hydratase A (961 aa).

[4Fe-4S] cluster contacts are provided by Cys-499, Cys-565, and Cys-568.

The protein belongs to the aconitase/IPM isomerase family. As to quaternary structure, monomer. It depends on [4Fe-4S] cluster as a cofactor.

The enzyme catalyses citrate = D-threo-isocitrate. It catalyses the reaction (2S,3R)-3-hydroxybutane-1,2,3-tricarboxylate = 2-methyl-cis-aconitate + H2O. The protein operates within carbohydrate metabolism; tricarboxylic acid cycle; isocitrate from oxaloacetate: step 2/2. It participates in organic acid metabolism; propanoate degradation. Its function is as follows. Involved in the catabolism of short chain fatty acids (SCFA) via the tricarboxylic acid (TCA)(acetyl degradation route) and probably via the 2-methylcitrate cycle I (propionate degradation route). Catalyzes the reversible isomerization of citrate to isocitrate via cis-aconitate. The apo form of AcnA functions as a RNA-binding regulatory protein. Could catalyze the hydration of 2-methyl-cis-aconitate to yield (2R,3S)-2-methylisocitrate. In Mycobacterium avium, this protein is Aconitate hydratase A (acn).